Consider the following 298-residue polypeptide: HTH-type transcriptional regulator ArgP (298 aa).

Residues 4–60 (LDYKWIEALDAVVYQGSFERAAEHLFVSQSAISQRIKQLEKFLAQPVLIREQPPKPT) form the HTH lysR-type domain. Positions 21 to 40 (FERAAEHLFVSQSAISQRIK) form a DNA-binding region, H-T-H motif.

The protein belongs to the LysR transcriptional regulatory family. Homodimer.

In terms of biological role, controls the transcription of genes involved in arginine and lysine metabolism. This chain is HTH-type transcriptional regulator ArgP, found in Vibrio parahaemolyticus serotype O3:K6 (strain RIMD 2210633).